A 65-amino-acid polypeptide reads, in one-letter code: UPF0434 protein RPB_0294 (65 aa).

It belongs to the UPF0434 family.

In Rhodopseudomonas palustris (strain HaA2), this protein is UPF0434 protein RPB_0294.